A 208-amino-acid chain; its full sequence is Octanoyltransferase (208 aa).

The BPL/LPL catalytic domain occupies 30 to 208; that stretch reads GTASEAVFIL…ILKQEFYKIF (179 aa). Substrate is bound by residues 69–76, 142–144, and 155–157; these read RGGKFTYH, SIG, and GVA. Cys-173 functions as the Acyl-thioester intermediate in the catalytic mechanism.

Belongs to the LipB family.

The protein resides in the cytoplasm. The enzyme catalyses octanoyl-[ACP] + L-lysyl-[protein] = N(6)-octanoyl-L-lysyl-[protein] + holo-[ACP] + H(+). It participates in protein modification; protein lipoylation via endogenous pathway; protein N(6)-(lipoyl)lysine from octanoyl-[acyl-carrier-protein]: step 1/2. Catalyzes the transfer of endogenously produced octanoic acid from octanoyl-acyl-carrier-protein onto the lipoyl domains of lipoate-dependent enzymes. Lipoyl-ACP can also act as a substrate although octanoyl-ACP is likely to be the physiological substrate. This chain is Octanoyltransferase, found in Orientia tsutsugamushi (strain Boryong) (Rickettsia tsutsugamushi).